Consider the following 570-residue polypeptide: E3 ubiquitin-protein ligase ZFP91 (570 aa).

The segment covering 1-12 (MPGETEEPRPPE) has biased composition (basic and acidic residues). Residues 1 to 306 (MPGETEEPRP…PRLPKRRKKP (306 aa)) are disordered. Composition is skewed to low complexity over residues 31–43 (QRPP…APAG) and 59–68 (AAAAAAAAAV). A compositionally biased stretch (basic residues) spans 69–82 (SRRRKAEYPRRRRS). Phosphoserine occurs at positions 83 and 103. Positions 94-104 (QQPQAAKSPSP) are enriched in polar residues. The segment covering 119 to 128 (VTTDKDPKEE) has biased composition (basic and acidic residues). Acidic residues predominate over residues 207–223 (SEEEEEEEEEMLISEEE). Composition is skewed to basic and acidic residues over residues 224-245 (IPFK…ETPK) and 252-269 (KVKE…VEVE). Over residues 270-282 (VKEEENEIREDEE) the composition is skewed to acidic residues. C2H2-type zinc fingers lie at residues 311-336 (VRCE…KYQH), 342-366 (YVCP…AKHH), 372-394 (YICE…RMIH), 400-422 (LQCE…MKKH), and 430-453 (FSCN…AKSH). Residues 338 to 368 (LKKKYVCPHPSCGRLFRLQKQLLRHAKHHTD) form an interaction with MAP3K14/NIK region.

The protein belongs to the krueppel C2H2-type zinc-finger protein family. In terms of assembly, interacts with MAP3K14/NIK. Expressed ubiquitously, particularly at high level in testis. Isoform 2 is testis specific.

It localises to the nucleus. The catalysed reaction is S-ubiquitinyl-[E2 ubiquitin-conjugating enzyme]-L-cysteine + [acceptor protein]-L-lysine = [E2 ubiquitin-conjugating enzyme]-L-cysteine + N(6)-ubiquitinyl-[acceptor protein]-L-lysine.. The protein operates within protein modification; protein ubiquitination. Its function is as follows. Atypical E3 ubiquitin-protein ligase that mediates 'Lys-63'-linked ubiquitination of MAP3K14/NIK, leading to stabilize and activate MAP3K14/NIK. It thereby acts as an activator of the non-canonical NF-kappa-B2/NFKB2 pathway. May also play an important role in cell proliferation and/or anti-apoptosis. In Homo sapiens (Human), this protein is E3 ubiquitin-protein ligase ZFP91 (ZFP91).